The primary structure comprises 184 residues: ATP synthase subunit b, chloroplastic (184 aa).

Residues 27-49 traverse the membrane as a helical segment; that stretch reads LATNPINLSVVLGVLIFFGKGVL.

The protein belongs to the ATPase B chain family. In terms of assembly, F-type ATPases have 2 components, F(1) - the catalytic core - and F(0) - the membrane proton channel. F(1) has five subunits: alpha(3), beta(3), gamma(1), delta(1), epsilon(1). F(0) has four main subunits: a(1), b(1), b'(1) and c(10-14). The alpha and beta chains form an alternating ring which encloses part of the gamma chain. F(1) is attached to F(0) by a central stalk formed by the gamma and epsilon chains, while a peripheral stalk is formed by the delta, b and b' chains.

The protein localises to the plastid. The protein resides in the chloroplast thylakoid membrane. F(1)F(0) ATP synthase produces ATP from ADP in the presence of a proton or sodium gradient. F-type ATPases consist of two structural domains, F(1) containing the extramembraneous catalytic core and F(0) containing the membrane proton channel, linked together by a central stalk and a peripheral stalk. During catalysis, ATP synthesis in the catalytic domain of F(1) is coupled via a rotary mechanism of the central stalk subunits to proton translocation. Its function is as follows. Component of the F(0) channel, it forms part of the peripheral stalk, linking F(1) to F(0). The sequence is that of ATP synthase subunit b, chloroplastic from Solanum bulbocastanum (Wild potato).